The sequence spans 255 residues: 4-hydroxy-tetrahydrodipicolinate reductase (255 aa).

NAD(+) contacts are provided by residues 9–14 (GFKGRM), 89–91 (GTT), and 115–118 (APNF). Residue His145 is the Proton donor/acceptor of the active site. Residue His146 participates in (S)-2,3,4,5-tetrahydrodipicolinate binding. Residue Lys149 is the Proton donor of the active site. 155 to 156 (GT) contacts (S)-2,3,4,5-tetrahydrodipicolinate.

This sequence belongs to the DapB family.

The protein localises to the cytoplasm. It carries out the reaction (S)-2,3,4,5-tetrahydrodipicolinate + NAD(+) + H2O = (2S,4S)-4-hydroxy-2,3,4,5-tetrahydrodipicolinate + NADH + H(+). The enzyme catalyses (S)-2,3,4,5-tetrahydrodipicolinate + NADP(+) + H2O = (2S,4S)-4-hydroxy-2,3,4,5-tetrahydrodipicolinate + NADPH + H(+). Its pathway is amino-acid biosynthesis; L-lysine biosynthesis via DAP pathway; (S)-tetrahydrodipicolinate from L-aspartate: step 4/4. Catalyzes the conversion of 4-hydroxy-tetrahydrodipicolinate (HTPA) to tetrahydrodipicolinate. The sequence is that of 4-hydroxy-tetrahydrodipicolinate reductase from Streptococcus thermophilus (strain CNRZ 1066).